A 442-amino-acid polypeptide reads, in one-letter code: Mimosinase, chloroplastic (442 aa).

The N-terminal 35 residues, M1–C35, are a transit peptide targeting the chloroplast. Residues Y103, R105, G133, M134, S252, and T254 each coordinate pyridoxal 5'-phosphate. The residue at position 255 (K255) is an N6-(pyridoxal phosphate)lysine.

Belongs to the trans-sulfuration enzymes family. Forms homodimers. May form homotetramers from two homodimers. The cofactor is pyridoxal 5'-phosphate.

It is found in the plastid. Its subcellular location is the chloroplast. The enzyme catalyses L-mimosine + H2O = 3-hydroxy-4H-pyrid-4-one + pyruvate + NH4(+). The catalysed reaction is L,L-cystathionine + H2O = L-homocysteine + pyruvate + NH4(+). It catalyses the reaction an S-substituted L-cysteine + H2O = a thiol + pyruvate + NH4(+). Functionally, catalyzes the degradation of mimosine, which is a toxic secondary metabolite found in all Mimosa and Leucaena species. Catalyzes the degradation of cystathionine, but seems to have lower preference toward cystathionine over mimosine. The sequence is that of Mimosinase, chloroplastic from Mimosa pudica (Sensitive plant).